Reading from the N-terminus, the 474-residue chain is BPI fold-containing family B member 1 (474 aa).

Positions 1–21 (MAGPWIITLLCGLLGATLVQA) are cleaved as a signal peptide. N-linked (GlcNAc...) asparagine glycans are attached at residues asparagine 153, asparagine 160, asparagine 263, and asparagine 400. The cysteines at positions 157 and 200 are disulfide-linked.

This sequence belongs to the BPI/LBP/Plunc superfamily. Plunc family. As to expression, expressed in tongue, lung, thymus, and stomach. Expressed in epithelia of palate, anterior pharynx, trachea and upper bronchi. Expressed in distal tip of papillae in the anterior third of the tongue and in serous cells of von Ebner glands in the posterior third of the tongue. Expressed in columnar epithelium of the duodenum in embryonic gut at 16.5 dpc.

The protein resides in the secreted. Functionally, may play a role in innate immunity in mouth, nose and lungs. Binds bacterial lipopolysaccharide (LPS) and modulates the cellular responses to LPS. May be involved in formation of the left-right axis in the node of the developing embryo. The protein is BPI fold-containing family B member 1 (Bpifb1) of Mus musculus (Mouse).